A 588-amino-acid polypeptide reads, in one-letter code: Sulfite reductase [NADPH] hemoprotein beta-component (588 aa).

Residues cysteine 442, cysteine 448, cysteine 487, and cysteine 491 each contribute to the [4Fe-4S] cluster site. Cysteine 491 is a siroheme binding site.

This sequence belongs to the nitrite and sulfite reductase 4Fe-4S domain family. In terms of assembly, alpha(8)-beta(8). The alpha component is a flavoprotein, the beta component is a hemoprotein. Siroheme serves as cofactor. [4Fe-4S] cluster is required as a cofactor.

It catalyses the reaction hydrogen sulfide + 3 NADP(+) + 3 H2O = sulfite + 3 NADPH + 4 H(+). The protein operates within sulfur metabolism; hydrogen sulfide biosynthesis; hydrogen sulfide from sulfite (NADPH route): step 1/1. In terms of biological role, component of the sulfite reductase complex that catalyzes the 6-electron reduction of sulfite to sulfide. This is one of several activities required for the biosynthesis of L-cysteine from sulfate. This is Sulfite reductase [NADPH] hemoprotein beta-component from Actinobacillus pleuropneumoniae serotype 7 (strain AP76).